Reading from the N-terminus, the 266-residue chain is Undecaprenyl-diphosphatase (266 aa).

The next 8 helical transmembrane spans lie at 1–21, 39–59, 83–103, 111–131, 144–164, 183–203, 218–238, and 246–266; these read MDTF…FLPI, QGLA…VLYF, SKLA…GFAL, LRGP…LWWA, TGWK…IPGT, AAAR…AILM, SLAL…HLFL, and MTPF…FIFM.

Belongs to the UppP family.

It localises to the cell inner membrane. It catalyses the reaction di-trans,octa-cis-undecaprenyl diphosphate + H2O = di-trans,octa-cis-undecaprenyl phosphate + phosphate + H(+). Catalyzes the dephosphorylation of undecaprenyl diphosphate (UPP). Confers resistance to bacitracin. This is Undecaprenyl-diphosphatase from Shewanella woodyi (strain ATCC 51908 / MS32).